We begin with the raw amino-acid sequence, 484 residues long: MYKTVLKNSGRIQRNFIFRNVSSTLQRSLATSASTSSSTTTSNAETGELHVSTPLDSPSVHPPDGSSISLKSATRDASLFGTRPIYLDVQATTPVDPRVLDKMLEFYTGLYGNPHSSTHAYGWETDKEVEKARGYIADVINADPKEIIFTSGATETNNMAIKGVPRFYKKTKKHIITTQTEHKCVLDSARHMQDEGFDITYLPVNSEGLINLDDLKKAIRKDTVLVSVMAVNNEIGVIQPLKEIGQICRENKIFFHTDAAQAYGKIPIDVNEMNIDLLSISSHKIYGPKGIGACYVRRRPRVRLDPIITGGGQERGLRSGTLAPPLVAGFGEAARLMKQESAFDKKHIEKLSTKLKNGLLSIPSTQFNGCNNPTYQYPGCVNVSFAYIEGESLLMALKDIALSSGSACTSASLEPSYVLHALGADDALAHSSIRFGIGRFTTEAEVDYVIQAINERVDFLRKMSPLWEMVQGGIDLNSIEWSGH.

Positions leucine 29 to serine 42 are enriched in low complexity. The interval leucine 29–serine 69 is disordered. Pyridoxal 5'-phosphate contacts are provided by residues alanine 153–threonine 154, asparagine 233, glutamine 261, and serine 281–histidine 283. N6-(pyridoxal phosphate)lysine is present on lysine 284. Position 321 (threonine 321) interacts with pyridoxal 5'-phosphate. Cysteine 408 functions as the Cysteine persulfide intermediate in the catalytic mechanism. Residue cysteine 408 participates in [2Fe-2S] cluster binding.

It belongs to the class-V pyridoxal-phosphate-dependent aminotransferase family. NifS/IscS subfamily. It depends on pyridoxal 5'-phosphate as a cofactor.

Its subcellular location is the mitochondrion. The enzyme catalyses (sulfur carrier)-H + L-cysteine = (sulfur carrier)-SH + L-alanine. Catalyzes the removal of elemental sulfur from cysteine to produce alanine. It supplies the inorganic sulfur for iron-sulfur (Fe-S) clusters. Plays a role in both tRNA-processing and mitochondrial metabolism. Involved in the 2-thio-modification of both 5-carboxymethylaminomethyl-2-thiouridine in mitochondrial tRNAs and 5-methoxycarbonylmethyl-2-thiouridine (mcm5s2U) in cytoplasmic tRNAs. In Candida maltosa (Yeast), this protein is Cysteine desulfurase, mitochondrial.